The chain runs to 348 residues: Rhodopsin (348 aa).

An N-acetylmethionine modification is found at M1. Topologically, residues 1 to 36 (MNGTEGPNFYVPFSNATGVVRSPFEYPQYYLAEPWQ) are extracellular. N-linked (GlcNAc...) asparagine glycans are attached at residues N2 and N15. The helical transmembrane segment at 37 to 61 (FSMLAAYMFLLIVLGFPINFLTLYV) threads the bilayer. Topologically, residues 62-73 (TVQHKKLRTPLN) are cytoplasmic. The helical transmembrane segment at 74–96 (YILLNLAVADLFMVFGGFTTTLY) threads the bilayer. Residues 97 to 110 (TSLHGYFVFGPTGC) are Extracellular-facing. The cysteines at positions 110 and 187 are disulfide-linked. A helical membrane pass occupies residues 111–133 (NLEGFFATLGGEIALWSLVVLAI). A 'Ionic lock' involved in activated form stabilization motif is present at residues 134-136 (ERY). The Cytoplasmic segment spans residues 134-152 (ERYVVICKPMSNFRFGENH). Residues 153 to 173 (AIMGVVFTWIMALACAAPPLV) form a helical membrane-spanning segment. Topologically, residues 174 to 202 (GWSRYIPEGMQCSCGVDYYTLKPEVNNES) are extracellular. E201 is a Zn(2+) binding site. A helical transmembrane segment spans residues 203–224 (FVIYMFVVHFTIPLIVIFFCYG). The Cytoplasmic segment spans residues 225–252 (QLVFTVKEAAAQQQESATTQKAEKEVTR). Residues 253–274 (MVILMVVFFLICWFPYAGVAFY) form a helical membrane-spanning segment. The Extracellular segment spans residues 275–286 (IFTHQGSNFGPI). Q279 contributes to the Zn(2+) binding site. The helical transmembrane segment at 287 to 308 (FMTLPAFFAKSSSIYNPVIYIM) threads the bilayer. K296 is subject to N6-(retinylidene)lysine. At 309–348 (MNKQFRNCMLTTLCCGKNILGDDEASATASKTETSQVAPA) the chain is on the cytoplasmic side. 2 S-palmitoyl cysteine lipidation sites follow: C322 and C323. Residues 330–348 (DDEASATASKTETSQVAPA) are interaction with SAG. At S334 the chain carries Phosphoserine. T336 carries the post-translational modification Phosphothreonine. S338 carries the post-translational modification Phosphoserine. Phosphothreonine occurs at positions 340 and 342. S343 is modified (phosphoserine).

This sequence belongs to the G-protein coupled receptor 1 family. Opsin subfamily. Homodimer. May form a complex composed of RHO, GRK1 and RCVRN in a Ca(2+)-dependent manner; RCVRN prevents the interaction between GRK1 and RHO. Interacts with GRK1. Interacts (phosphorylated form) with SAG. Interacts with GNAT1. Interacts with GNAT3. SAG and G-proteins compete for a common binding site. Interacts with PRCD; the interaction promotes PRCD stability. Forms a complex with ASAP1 and ARF4. Forms a complex with ASAP1, RAB11A, Rabin8/RAB3IP, ARF4 and RAB11FIP3; the complex regulates Golgi-to-cilia rhodopsin/RHO transport in photoreceptors. Phosphorylated on some or all of the serine and threonine residues present in the C-terminal region. In terms of processing, contains one covalently linked retinal chromophore. Upon light absorption, the covalently bound 11-cis-retinal is converted to all-trans-retinal. After hydrolysis of the Schiff base and release of the covalently bound all-trans-retinal, active rhodopsin is regenerated by binding of a fresh molecule of 11-cis-retinal.

The protein localises to the membrane. It localises to the cell projection. The protein resides in the cilium. Its subcellular location is the photoreceptor outer segment. Photoreceptor required for image-forming vision at low light intensity. Required for photoreceptor cell viability after birth. Light-induced isomerization of 11-cis to all-trans retinal triggers a conformational change that activates signaling via G-proteins. Subsequent receptor phosphorylation mediates displacement of the bound G-protein alpha subunit by the arrestin SAG and terminates signaling. This is Rhodopsin (RHO) from Cricetulus griseus (Chinese hamster).